Reading from the N-terminus, the 297-residue chain is Aspartate carbamoyltransferase catalytic subunit (297 aa).

Residues Arg-52 and Thr-53 each coordinate carbamoyl phosphate. Lys-80 serves as a coordination point for L-aspartate. Positions 102, 130, and 133 each coordinate carbamoyl phosphate. L-aspartate is bound by residues Arg-167 and Arg-217. Residues Gly-256 and Pro-257 each coordinate carbamoyl phosphate.

Belongs to the aspartate/ornithine carbamoyltransferase superfamily. ATCase family. In terms of assembly, heterododecamer (2C3:3R2) of six catalytic PyrB chains organized as two trimers (C3), and six regulatory PyrI chains organized as three dimers (R2).

It catalyses the reaction carbamoyl phosphate + L-aspartate = N-carbamoyl-L-aspartate + phosphate + H(+). Its pathway is pyrimidine metabolism; UMP biosynthesis via de novo pathway; (S)-dihydroorotate from bicarbonate: step 2/3. Functionally, catalyzes the condensation of carbamoyl phosphate and aspartate to form carbamoyl aspartate and inorganic phosphate, the committed step in the de novo pyrimidine nucleotide biosynthesis pathway. In Helicobacter hepaticus (strain ATCC 51449 / 3B1), this protein is Aspartate carbamoyltransferase catalytic subunit.